The primary structure comprises 432 residues: Glutamate-1-semialdehyde 2,1-aminomutase 1 (432 aa).

Lysine 268 is subject to N6-(pyridoxal phosphate)lysine.

Belongs to the class-III pyridoxal-phosphate-dependent aminotransferase family. HemL subfamily. As to quaternary structure, homodimer. The cofactor is pyridoxal 5'-phosphate.

Its subcellular location is the cytoplasm. It carries out the reaction (S)-4-amino-5-oxopentanoate = 5-aminolevulinate. The protein operates within porphyrin-containing compound metabolism; protoporphyrin-IX biosynthesis; 5-aminolevulinate from L-glutamyl-tRNA(Glu): step 2/2. The chain is Glutamate-1-semialdehyde 2,1-aminomutase 1 from Bacillus mycoides (strain KBAB4) (Bacillus weihenstephanensis).